The chain runs to 33 residues: Gastrin (33 aa).

Residues Q1 and Q18 each carry the pyrrolidone carboxylic acid modification. Y28 carries the sulfotyrosine modification. A Phenylalanine amide modification is found at F33.

Belongs to the gastrin/cholecystokinin family.

It localises to the secreted. Its function is as follows. Gastrin stimulates the stomach mucosa to produce and secrete hydrochloric acid and the pancreas to secrete its digestive enzymes. It also stimulates smooth muscle contraction and increases blood circulation and water secretion in the stomach and intestine. The protein is Gastrin (GAST) of Didelphis virginiana (North American opossum).